A 359-amino-acid chain; its full sequence is Probable NAD(P)H nitroreductase PigM (359 aa).

This sequence belongs to the nitroreductase family. FMN serves as cofactor.

It functions in the pathway antibiotic biosynthesis; prodigiosin biosynthesis. Involved in the biosynthesis of 4-methoxy-2,2'-bipyrrole-5-carbaldehyde (MBC), one of the terminal products involved in the biosynthesis of the red antibiotic prodigiosin (Pig). Catalyzes the oxidation of the hydroxy group of 4-hydroxy-2,2'-bipyrrole-5-methanol (HBM) to yield 4-methoxy-2,2'-bipyrrole-5-carbaldehyde (MBC). This chain is Probable NAD(P)H nitroreductase PigM, found in Serratia sp. (strain ATCC 39006) (Prodigiosinella confusarubida).